The chain runs to 258 residues: Hydroxyacylglutathione hydrolase (258 aa).

H56, H58, D60, H61, H112, D132, and H170 together coordinate Zn(2+).

The protein belongs to the metallo-beta-lactamase superfamily. Glyoxalase II family. As to quaternary structure, monomer. The cofactor is Zn(2+).

The catalysed reaction is an S-(2-hydroxyacyl)glutathione + H2O = a 2-hydroxy carboxylate + glutathione + H(+). It participates in secondary metabolite metabolism; methylglyoxal degradation; (R)-lactate from methylglyoxal: step 2/2. Its function is as follows. Thiolesterase that catalyzes the hydrolysis of S-D-lactoyl-glutathione to form glutathione and D-lactic acid. The polypeptide is Hydroxyacylglutathione hydrolase (Pseudomonas aeruginosa (strain LESB58)).